Consider the following 338-residue polypeptide: Ankyrin-repeat domain containing transcription coregulator asaA (338 aa).

Positions 1–10 (MGAPHEEIQA) are enriched in basic and acidic residues. 2 disordered regions span residues 1–70 (MGAP…LRST) and 112–137 (ASSVSPSSSAGPLSSSPSPSQRPFID). Positions 11–33 (LKRRREQNRLAQRRRRDNVRRRL) are enriched in basic residues. Residues 42-70 (SPASASQTSLCSSTDSRVTLNPHQSLRST) are compositionally biased toward polar residues. Residues 112–130 (ASSVSPSSSAGPLSSSPSP) show a composition bias toward low complexity. 3 ANK repeats span residues 235–264 (RWTTALHMAVSQGNFSVMRLLLSYGADPNA), 268–297 (EGATALHVGVMNGNYTMVAELLQRGADPTL), and 301–330 (AGWLPLHQAVHAGDEGCVRVLLEADQPVDY).

It functions in the pathway secondary metabolite biosynthesis. Its function is as follows. Transcription coregulator involved in regulation of gene cluster that mediates the biosynthesis of aspergillic acid, a hydroxamic acid-containing pyrazinone with aliphatic side chains that originates from leucine (Leu) and isoleucine (Ile). Aspergillic acid has antibiotic properties and was shown to be lethal to mice. This is Ankyrin-repeat domain containing transcription coregulator asaA from Aspergillus flavus (strain ATCC 200026 / FGSC A1120 / IAM 13836 / NRRL 3357 / JCM 12722 / SRRC 167).